The sequence spans 299 residues: Small ribosomal subunit protein uS3 (299 aa).

Residues 39–107 (VREYLKAKLK…PVAVNIEEVR (69 aa)) enclose the KH type-2 domain. Residues 214 to 299 (PVIKTDERED…AVAPGDAKGE (86 aa)) are disordered. Residues 217-248 (KTDEREDDRRNRRGPRSDRPAGDRRPPSRDGA) show a composition bias toward basic and acidic residues. A compositionally biased stretch (low complexity) spans 257–282 (ADAGAAAPTDKPADGAAPAAADGPKA).

The protein belongs to the universal ribosomal protein uS3 family. As to quaternary structure, part of the 30S ribosomal subunit. Forms a tight complex with proteins S10 and S14.

Functionally, binds the lower part of the 30S subunit head. Binds mRNA in the 70S ribosome, positioning it for translation. This Methylibium petroleiphilum (strain ATCC BAA-1232 / LMG 22953 / PM1) protein is Small ribosomal subunit protein uS3.